A 259-amino-acid polypeptide reads, in one-letter code: Small ribosomal subunit protein uS2 (259 aa).

The protein belongs to the universal ribosomal protein uS2 family.

This chain is Small ribosomal subunit protein uS2, found in Dinoroseobacter shibae (strain DSM 16493 / NCIMB 14021 / DFL 12).